A 188-amino-acid polypeptide reads, in one-letter code: Gag polyprotein (188 aa).

Residues 77–90 (VGETTVQRDAKMAP) show a composition bias toward basic and acidic residues. Residues 77–99 (VGETTVQRDAKMAPEETATPKTV) are disordered. The short motif at 121–124 (PPPY) is the PPXY motif element. Positions 130-166 (YPSLAGVGEQQGQGGDTPRGAEQPRAEPGHAGLAPGP) are disordered.

Specific enzymatic cleavages in vivo yield mature proteins.

Its subcellular location is the virion. The chain is Gag polyprotein (ev-2) from Galliformes (EV-2).